Consider the following 64-residue polypeptide: Large ribosomal subunit protein bL35 (64 aa).

A compositionally biased stretch (polar residues) spans 1–10 (MPKMKTNSAA). The disordered stretch occupies residues 1–64 (MPKMKTNSAA…SKNMKKLLGR (64 aa)).

It belongs to the bacterial ribosomal protein bL35 family.

This Bifidobacterium adolescentis (strain ATCC 15703 / DSM 20083 / NCTC 11814 / E194a) protein is Large ribosomal subunit protein bL35.